Here is a 284-residue protein sequence, read N- to C-terminus: 4-hydroxybenzoate octaprenyltransferase (284 aa).

Helical transmembrane passes span 33-53 (VIAA…LGVF), 93-113 (IGLF…MNPL), 136-156 (YLPQ…AWAA), 159-179 (GELP…TIAY), 209-229 (LVIG…GQHY), 231-248 (LGQS…LFVY), and 264-284 (AFLN…IAFW).

This sequence belongs to the UbiA prenyltransferase family. The cofactor is Mg(2+).

Its subcellular location is the cell inner membrane. The catalysed reaction is all-trans-octaprenyl diphosphate + 4-hydroxybenzoate = 4-hydroxy-3-(all-trans-octaprenyl)benzoate + diphosphate. Its pathway is cofactor biosynthesis; ubiquinone biosynthesis. In terms of biological role, catalyzes the prenylation of para-hydroxybenzoate (PHB) with an all-trans polyprenyl group. Mediates the second step in the final reaction sequence of ubiquinone-8 (UQ-8) biosynthesis, which is the condensation of the polyisoprenoid side chain with PHB, generating the first membrane-bound Q intermediate 3-octaprenyl-4-hydroxybenzoate. In Vibrio campbellii (strain ATCC BAA-1116), this protein is 4-hydroxybenzoate octaprenyltransferase.